The following is a 316-amino-acid chain: Ribosomal RNA small subunit methyltransferase H (316 aa).

Residues 35–37 (GGH), Asp55, Phe79, Asp101, and Gln108 each bind S-adenosyl-L-methionine.

The protein belongs to the methyltransferase superfamily. RsmH family.

It localises to the cytoplasm. The enzyme catalyses cytidine(1402) in 16S rRNA + S-adenosyl-L-methionine = N(4)-methylcytidine(1402) in 16S rRNA + S-adenosyl-L-homocysteine + H(+). In terms of biological role, specifically methylates the N4 position of cytidine in position 1402 (C1402) of 16S rRNA. In Aliivibrio fischeri (strain MJ11) (Vibrio fischeri), this protein is Ribosomal RNA small subunit methyltransferase H.